The chain runs to 753 residues: Nuclear hormone receptor family member daf-12 (753 aa).

Residues 1 to 109 form a disordered region; that stretch reads MGTNGGVIAE…PDDGLLDSSE (109 aa). Residues 20-29 show a composition bias toward basic and acidic residues; the sequence is NPDKVEEPVV. Residues 30 to 44 are compositionally biased toward basic residues; sequence RRKRVTRRRHRRIHS. The nuclear receptor DNA-binding region spans 115–190; the sequence is QKTCRVCGDH…VGMKKEWILN (76 aa). NR C4-type zinc fingers lie at residues 118 to 138 and 154 to 173; these read CRVCGDHATGYNFNVITCESC and CPYSEDCEINSVSRRFCQKC. A Nuclear localization signal motif is present at residues 191-206; it reads EEQLRRRKNSRLNNTG. 3 disordered regions span residues 198–251, 266–314, and 376–410; these read KNSR…TINP, NAMP…GYDP, and GHPMPAETTPPYSAPMSDMSLSRHNSTSSGTEKNH. A compositionally biased stretch (polar residues) spans 201–211; that stretch reads RLNNTGTCNKR. The segment covering 212 to 227 has biased composition (low complexity); it reads SQPGNQQSPQGPNQQP. Composition is skewed to polar residues over residues 285–301 and 394–410; these read PVGSSASDSPPNRSLTM and MSLSRHNSTSSGTEKNH. In terms of domain architecture, NR LBD spans 516 to 753; it reads AELKALDAVR…ELPGEFFKIK (238 aa).

Belongs to the nuclear hormone receptor family. As to quaternary structure, interacts with din-1 isoform d. In terms of tissue distribution, expressed throughout muscles of the pharynx. Expressed in epidermal seam cells, the vulva, head neurons, mature spermatheca, uterus and intestine.

The protein resides in the nucleus. Functionally, nuclear receptor which binds directly to response elements in target gene promoters. Activity is modulated by binding of steroid hormone ligands that include dafachronic acids. Regulates expression of genes involved in postembryonic development and the dauer diapause, in response to environmental cues. Inhibits the expression of let-7 family members when bound to corepressor din-1s which is an isoform of din-1. Plays a role in controlling the timing of seam cell development during the larval stages. Has a role in the immune response to bacterial infection, via regulation of let-7 miRNAs. Controls expression of genes that promote the aerobic catabolism of fatty acids for reproductive growth. May be involved in thermotolerance. The sequence is that of Nuclear hormone receptor family member daf-12 from Caenorhabditis elegans.